Reading from the N-terminus, the 295-residue chain is ATP synthase gamma chain (295 aa).

The protein belongs to the ATPase gamma chain family. As to quaternary structure, F-type ATPases have 2 components, CF(1) - the catalytic core - and CF(0) - the membrane proton channel. CF(1) has five subunits: alpha(3), beta(3), gamma(1), delta(1), epsilon(1). CF(0) has three main subunits: a, b and c.

It is found in the cell inner membrane. Produces ATP from ADP in the presence of a proton gradient across the membrane. The gamma chain is believed to be important in regulating ATPase activity and the flow of protons through the CF(0) complex. The chain is ATP synthase gamma chain from Bdellovibrio bacteriovorus (strain ATCC 15356 / DSM 50701 / NCIMB 9529 / HD100).